A 170-amino-acid polypeptide reads, in one-letter code: Transmembrane protein 217B (170 aa).

A signal peptide spans 1-21 (MNVRMFSLMVGIFSVLNTTQF). Over 22–58 (FIFDLNQKTHICYEAKFSIYVDSKSELVTWTLFHRAN) the chain is Lumenal. A helical membrane pass occupies residues 59-79 (ISTGLSLTTIIIGCFLFYCIH). The Cytoplasmic segment spans residues 80–85 (KNIYMG). A helical membrane pass occupies residues 86–106 (LLIYAMWIITYELINFSIVLL). Topologically, residues 107–120 (LNGIIKDHFKTLSY) are lumenal. The helical transmembrane segment at 121–141 (LHWIFQISHMLLHFFCLPFIV) threads the bilayer. At 142–170 (KHAYNLYKESQTVGRKRRHRLCSTIAVNS) the chain is on the cytoplasmic side.

It localises to the membrane. This chain is Transmembrane protein 217B, found in Homo sapiens (Human).